A 508-amino-acid chain; its full sequence is MMRQDRRNLLERNILVFSNKLQSEQILEVLIAKQILNADNGDVINSCRTERDKRKEIVKAVQRRGDVAFDAFYDALRDTGHHELAAVLEPLARTIDFITPRDLECPMSPASHRRSRALSPSTFSSPTRVHRDSVSSVSSFTSTYQDVYTRARSTSRSSRPLHASDRHNYVSPSNSFQSQPSSANSSFTGCSSLGYSSSRTRSYSKASAHSQYIFHEEDMNYVDAPTIHRVFDEKTMYRNFSTPRGLCLIINNEHFEQMPTRNGTKADKDNISNLFRCMGYIVHCKDNLTGRAMMLTIRDFAKNETHGDSAILVILSHGEENVIIGVDDVSVNVHEIYDLLNAANAPRLANKPKLVFVQACRGERRDNGFPVLDSVDGVPALIRPRGWDKGDGPLFNFLGCVRPQAQQVWRKKPSQADILIAYATTAQYVSWRNSARGSWFIQAVCEVFSLHAKDMDVVELLTEVNKKVACGFQTSQGANILKQMPELTSRLLKKFYFWPEDRNRSSAV.

Positions 1–223 are excised as a propeptide; sequence MMRQDRRNLL…FHEEDMNYVD (223 aa). In terms of domain architecture, CARD spans 2–91; the sequence is MRQDRRNLLE…HELAAVLEPL (90 aa). Disordered regions lie at residues 106 to 130 and 148 to 184; these read PMSP…TRVH and YTRA…SSAN. Polar residues predominate over residues 118–127; that stretch reads LSPSTFSSPT. Low complexity predominate over residues 171–184; the sequence is SPSNSFQSQPSSAN. Catalysis depends on residues His317 and Cys360. The required for interaction with ced-4 stretch occupies residues 392–407; the sequence is GPLFNFLGCVRPQAQQ.

The protein belongs to the peptidase C14A family. In terms of assembly, the active form is probably a heterodimer of the p17 subunit with either the p15 or p13 subunit which are all derived from the precursor by autocatalysis. Interacts with octameric ced-4 (two ced-3 zymogens per one ced-4 octamer); the interaction causes the autoproteolytic cleavage and activation of ced-3. Processed ced-3 also interacts with ced-4 octamer to form a stable holoenzyme. Interacts (via large subunit p17) with csp-3; the interaction prevents ced-3 autoactivation and delays ced-4-induced ced-3 processing. Interacts (via large subunit p17 or small subunit p13 or p15) with csp-2; the interaction inhibits ced-3 autoactivation. Interacts (via propeptide) with nucleoporin npp-14; the interaction tethers ced-3 to the nuclear membrane and prevents its autoprocessing in absence of ced-4. Interacts with dct-1. May form a complex composed of ced-3, ced-4 and mac-1. In terms of processing, autocatalytic cleavage removes the propeptide and generates the catalytic subunit p17 and two non-catalytic subunits p15 and p13; autoproteolysis is induced by ced-4 oligomer. Cleaved by caspase csp-1 probably at Asp-146 and Asp-376.

The protein resides in the nucleus membrane. It is found in the perikaryon. The protein localises to the synapse. Its subcellular location is the mitochondrion. It localises to the cytoplasm. The protein resides in the perinuclear region. It carries out the reaction Strict requirement for an Asp residue at position P1 and has a preferred cleavage sequence of Asp-Glu-Val-Asp-|-.. Octameric ced-4 activates zymogen autoprocessing and enhances activity of processed ced-3. Zymogen autoactivation is inhibited by csp-3. csp-3 has no effect on active ced-3. Zymogen autoactivation is inhibited by csp-2. Inhibited by cysteine protease inhibitor iodoacetic acid (CH3COOI). Inhibited by benzyloxycarbonyl-DEVD-fluoro-methyl ketone (zDEVD-fmk). Inhibited by benzyloxycarbonyl-VAD-fluoro-methyl ketone (zVAD-fmk). Not inhibited by N-[N-(L-3-transcarboxirane-2-carbonyl)-leucyl]-agmatine (E-64) or by the serine and cysteine protease inhibitor L-1-chloro-3-[4-to-osylamido]-7-amino-2-heptanone (TLCK). Functionally, acts as a cysteine protease in controlling programmed cell death (apoptosis) by proteolytically activating or inactivating a wide range of substrates. Component of the egl-1, ced-9, ced-4 and ced-3 apoptotic signaling cascade required for the initiation of programmed cell death in cells fated to die during embryonic and postembryonic development. During oogenesis, required for germline apoptosis downstream of ced-9 and ced-4 but independently of egl-1. By cleaving and activating ced-8, promotes phosphatidylserine exposure on the surface of apoptotic cells; phosphatidylserine is a specific marker only present at the surface of apoptotic cells and acts as a specific signal for engulfment. By cleaving and converting dcr-1 into a deoxyribonuclease (DNase), promotes apoptotic chromosomal DNA fragmentation. By cleaving mitochondrial fission protein drp-1, may regulate the removal of mitochondria during apoptosis. During germline apoptosis, cleaves translation initiation factor ifg-1 (isoform p170) promoting cap-independent translation. During male tail morphogenesis, promotes apoptosis of the tail-spike cell downstream of ced-4 but independently of egl-1 and ced-9. By cleaving cnt-1, prevents the activation of the prosurvival akt-1/2 signaling pathway and thus promotes apoptosis. Downstream of ced-4, may play a role in sex-specific cell apoptosis by cleaving sex-determining protein fem-1. May regulate germline apoptosis in response to DNA damage, probably downstream of let-60/ras and mpk-1 pathway. Cleaves ced-9 in vitro. Cleaves csp-2 isoform b resulting in the removal of the propeptide and the generation of csp-2 subunit p31 in vitro. Independently of its apoptotic role has additional functions. Probably by cleaving and thereby activating actin-severing protein gsnl-1, required for the elimination of transient presynaptic components during larval development downstream of egl-1, ced-9 and ced-4 pathway. Together with ain-1, a component of the miRNA-induced-silencing complex (miRISC), regulates temporal cell fate patterning during larval development. Acts in cell fate patterning by cleaving heterochronic protein lin-28, likely promoting its degradation. Also cleaves heterochronic protein lin-14 and exonuclease disl-2 in vitro. Downstream of calreticulin crt-1 and ced-4 and independently of egl-1 and ced-9, plays a role in the initial steps of axonal regrowth following axotomy. Cleaves 14-3-3-like protein ftt-2, tubulin tbb-2 and calreticulin crt-1 in vitro. Plays also a role in resistance to S.typhimurium-mediated infection. This is Cell death protein 3 from Caenorhabditis remanei (Caenorhabditis vulgaris).